The sequence spans 565 residues: Periplasmic trehalase (565 aa).

Positions 1 to 30 are cleaved as a signal peptide; sequence MKSPAPSRPQKMALIPACIFLCFAALSVQA. Substrate is bound by residues R152, 159–160, N196, 205–207, 277–279, and G310; these read WD, RSQ, and RPE. Residues D312 and E496 each act as proton donor/acceptor in the active site. Substrate is bound at residue E511. A disordered region spans residues 538 to 565; that stretch reads PCDNVPATRPTVKSATTQPSTKEAQPTP. A compositionally biased stretch (polar residues) spans 548-565; the sequence is TVKSATTQPSTKEAQPTP.

The protein belongs to the glycosyl hydrolase 37 family. As to quaternary structure, monomer.

It is found in the periplasm. The catalysed reaction is alpha,alpha-trehalose + H2O = alpha-D-glucose + beta-D-glucose. Functionally, provides the cells with the ability to utilize trehalose at high osmolarity by splitting it into glucose molecules that can subsequently be taken up by the phosphotransferase-mediated uptake system. In Escherichia coli O139:H28 (strain E24377A / ETEC), this protein is Periplasmic trehalase.